We begin with the raw amino-acid sequence, 185 residues long: Ribosome-recycling factor (185 aa).

It belongs to the RRF family.

Its subcellular location is the cytoplasm. In terms of biological role, responsible for the release of ribosomes from messenger RNA at the termination of protein biosynthesis. May increase the efficiency of translation by recycling ribosomes from one round of translation to another. The polypeptide is Ribosome-recycling factor (Trichlorobacter lovleyi (strain ATCC BAA-1151 / DSM 17278 / SZ) (Geobacter lovleyi)).